We begin with the raw amino-acid sequence, 284 residues long: UPF0761 membrane protein IL2447 (284 aa).

The next 6 helical transmembrane spans lie at 41–61 (MLSL…FPMF), 98–118 (MTAI…SAID), 137–157 (FAVY…GLAA), 178–198 (FVLW…MYQL), 214–234 (VIAA…ITFF), and 247–267 (IPIL…GAVL).

Belongs to the UPF0761 family.

It localises to the cell inner membrane. The protein is UPF0761 membrane protein IL2447 of Idiomarina loihiensis (strain ATCC BAA-735 / DSM 15497 / L2-TR).